We begin with the raw amino-acid sequence, 473 residues long: Photosystem II CP43 reaction center protein (473 aa).

A propeptide spanning residues 1–14 is cleaved from the precursor; it reads MKTLYSLRRFYHVE. Thr15 bears the N-acetylthreonine mark. Phosphothreonine is present on Thr15. Transmembrane regions (helical) follow at residues 69–93, 134–155, 178–200, 255–275, and 291–312; these read LFEVAHFVPEKPMYEQGLILLPHLA, LLGPETLEESFPFFGYVWKDRN, KALYFGGIYDTWAPGGGDVRKIT, KPFAWARRALVWSGEAYLSYS, and WFNNTAYPSEFYGPTGPEASQA. Residue Glu367 coordinates [CaMn4O5] cluster. Residues 447–471 traverse the membrane as a helical segment; the sequence is RARAAAAGFEKGIDRDFEPVLSMTP.

It belongs to the PsbB/PsbC family. PsbC subfamily. In terms of assembly, PSII is composed of 1 copy each of membrane proteins PsbA, PsbB, PsbC, PsbD, PsbE, PsbF, PsbH, PsbI, PsbJ, PsbK, PsbL, PsbM, PsbT, PsbX, PsbY, PsbZ, Psb30/Ycf12, at least 3 peripheral proteins of the oxygen-evolving complex and a large number of cofactors. It forms dimeric complexes. Binds multiple chlorophylls and provides some of the ligands for the Ca-4Mn-5O cluster of the oxygen-evolving complex. It may also provide a ligand for a Cl- that is required for oxygen evolution. PSII binds additional chlorophylls, carotenoids and specific lipids. serves as cofactor.

Its subcellular location is the plastid. The protein localises to the chloroplast thylakoid membrane. Functionally, one of the components of the core complex of photosystem II (PSII). It binds chlorophyll and helps catalyze the primary light-induced photochemical processes of PSII. PSII is a light-driven water:plastoquinone oxidoreductase, using light energy to abstract electrons from H(2)O, generating O(2) and a proton gradient subsequently used for ATP formation. This chain is Photosystem II CP43 reaction center protein, found in Glycine max (Soybean).